The following is a 644-amino-acid chain: Core protein VP4 (644 aa).

This sequence belongs to the orbivirus VP4 family.

It is found in the virion. Its function is as follows. The VP4 protein is one of the five proteins (with VP1, VP3, VP6 and VP7) which form the inner capsid of the virus. The polypeptide is Core protein VP4 (Segment-4) (Bluetongue virus 2 (isolate USA) (BTV 2)).